Here is a 332-residue protein sequence, read N- to C-terminus: Formamidase (332 aa).

The 246-residue stretch at 14–259 (FLTALIQYPV…WEIVTAEVYP (246 aa)) folds into the CN hydrolase domain. Residue Glu60 is the Proton acceptor of the active site. Lys132 acts as the Proton donor in catalysis. The active-site Nucleophile is Cys165.

Belongs to the carbon-nitrogen hydrolase superfamily. Aliphatic amidase family.

The catalysed reaction is formamide + H2O = formate + NH4(+). In terms of biological role, is an aliphatic amidase with a restricted substrate specificity, as it only hydrolyzes formamide. The protein is Formamidase of Bacillus thuringiensis (strain Al Hakam).